The primary structure comprises 395 residues: Phosphopentomutase (395 aa).

The Mn(2+) site is built by D14, D286, H291, D327, H328, and H339.

This sequence belongs to the phosphopentomutase family. The cofactor is Mn(2+).

It is found in the cytoplasm. The catalysed reaction is 2-deoxy-alpha-D-ribose 1-phosphate = 2-deoxy-D-ribose 5-phosphate. It carries out the reaction alpha-D-ribose 1-phosphate = D-ribose 5-phosphate. Its pathway is carbohydrate degradation; 2-deoxy-D-ribose 1-phosphate degradation; D-glyceraldehyde 3-phosphate and acetaldehyde from 2-deoxy-alpha-D-ribose 1-phosphate: step 1/2. Isomerase that catalyzes the conversion of deoxy-ribose 1-phosphate (dRib-1-P) and ribose 1-phosphate (Rib-1-P) to deoxy-ribose 5-phosphate (dRib-5-P) and ribose 5-phosphate (Rib-5-P), respectively. The protein is Phosphopentomutase of Staphylococcus haemolyticus (strain JCSC1435).